The chain runs to 219 residues: Response regulator ArlR (219 aa).

Residues 3-116 (NILIVEDEQN…ELLARIRAVL (114 aa)) form the Response regulatory domain. Asp52 is modified (4-aspartylphosphate). Positions 122–219 (KDVLDINGII…TVRGVGYVIR (98 aa)) form a DNA-binding region, ompR/PhoB-type.

In terms of processing, phosphorylated by ArlS.

It localises to the cytoplasm. Member of the two-component regulatory system ArlS/ArlR. The polypeptide is Response regulator ArlR (arlR) (Staphylococcus epidermidis (strain ATCC 12228 / FDA PCI 1200)).